The chain runs to 180 residues: Ribosome maturation factor RimM (180 aa).

In terms of domain architecture, PRC barrel spans 108 to 180 (PDEYYWVDLE…LIVVDWDPDF (73 aa)).

This sequence belongs to the RimM family. As to quaternary structure, binds ribosomal protein uS19.

It localises to the cytoplasm. Functionally, an accessory protein needed during the final step in the assembly of 30S ribosomal subunit, possibly for assembly of the head region. Essential for efficient processing of 16S rRNA. May be needed both before and after RbfA during the maturation of 16S rRNA. It has affinity for free ribosomal 30S subunits but not for 70S ribosomes. This Xanthomonas euvesicatoria pv. vesicatoria (strain 85-10) (Xanthomonas campestris pv. vesicatoria) protein is Ribosome maturation factor RimM.